We begin with the raw amino-acid sequence, 768 residues long: Mitochondrial 15S rRNA processing factor CCM1 (768 aa).

Residues 1–90 (MIRLIRWNNV…RSFTKVIAQH (90 aa)) constitute a mitochondrion transit peptide. 2 disordered regions span residues 28–65 (NKRK…NTGS) and 90–114 (HLKP…LPPI). Basic and acidic residues predominate over residues 43–53 (NRKDGDIEPYR). Positions 55 to 65 (TDQNQTPNTGS) are enriched in polar residues. PPR repeat units lie at residues 274–308 (KIDH…NIEI), 309–344 (SKMI…SQKT), 347–381 (DEKV…GMNV), 382–417 (NQNL…GWVP), and 418–452 (NLQT…NSVT). The span at 583 to 596 (IEPRQDEPTEKATT) shows a compositional bias: basic and acidic residues. The tract at residues 583–609 (IEPRQDEPTEKATTTEEQNASSETDNN) is disordered. The segment covering 597–609 (TEEQNASSETDNN) has biased composition (polar residues). The PPR 6 repeat unit spans residues 634–664 (DSYLYNLAIKAAGKFKNYGFAQEILHERGQF).

Belongs to the CCM1 family. In terms of assembly, binds to mitochondrial small subunit 15S rRNA.

It localises to the mitochondrion. Functionally, regulates mitochondrial small subunit maturation by controlling 15S rRNA 5'-end processing. Localizes to the 5' precursor of the 15S rRNA in a position that is subsequently occupied by mS47 in the mature yeast mtSSU. Uses structure and sequence-specific RNA recognition, binding to a single-stranded region of the precursor and specifically recognizing bases -6 to -1. The exchange of Ccm1 for mS47 is coupled to the irreversible removal of precursor rRNA that is accompanied by conformational changes of the mitoribosomal proteins uS5m and mS26. These conformational changes signal completion of 5'-end rRNA processing through protection of the mature 5'-end of the 15S rRNA and stabilization of mS47. The removal of the 5' precursor together with the dissociation of Ccm1 may be catalyzed by the 5'-3' exoribonuclease Pet127. Involved in the specific removal of group I introns in mitochondrial encoded transcripts. This Candida albicans (strain SC5314 / ATCC MYA-2876) (Yeast) protein is Mitochondrial 15S rRNA processing factor CCM1 (CCM1).